The sequence spans 486 residues: Intermediate cleaving peptidase 55 (486 aa).

The transit peptide at 1-19 directs the protein to the mitochondrion; it reads MSGYIRTLFIRNRFSNYRL. Residues D317, D328, H407, E434, and E457 each coordinate Mn(2+).

Belongs to the peptidase M24B family. Mn(2+) serves as cofactor.

It is found in the mitochondrion inner membrane. It catalyses the reaction The enzyme cleaves the 36-Pro-Pro-37 bond of cysteine desulfurase (EC 2.8.1.7) removing three amino acid residues (Tyr-Ser-Pro) from the N-terminus after cleavage by mitochondrial processing peptidase.. Aminopeptidase which cleaves preprotein intermediates that carry destabilizing N-ter amino acid residues after the mitochondrial processing peptidase (MPP) cleavage site and is thus critical for stabilization of the mitochondrial proteome. The protein is Intermediate cleaving peptidase 55 (icp55) of Schizosaccharomyces pombe (strain 972 / ATCC 24843) (Fission yeast).